The sequence spans 110 residues: tRNA-binding protein YgjH (110 aa).

One can recognise a tRNA-binding domain in the interval 8–110 (DFARLEMRVG…RMMPAGVRVV (103 aa)).

As to quaternary structure, homodimer.

In Escherichia coli (strain K12), this protein is tRNA-binding protein YgjH (ygjH).